The chain runs to 434 residues: Tol-Pal system protein TolB (434 aa).

The first 28 residues, 1-28, serve as a signal peptide directing secretion; the sequence is MMNTRVWCKIIGMLALLVWLVSSPSVFA.

Belongs to the TolB family. The Tol-Pal system is composed of five core proteins: the inner membrane proteins TolA, TolQ and TolR, the periplasmic protein TolB and the outer membrane protein Pal. They form a network linking the inner and outer membranes and the peptidoglycan layer.

It localises to the periplasm. In terms of biological role, part of the Tol-Pal system, which plays a role in outer membrane invagination during cell division and is important for maintaining outer membrane integrity. The sequence is that of Tol-Pal system protein TolB from Nitrosococcus oceani (strain ATCC 19707 / BCRC 17464 / JCM 30415 / NCIMB 11848 / C-107).